The following is a 72-amino-acid chain: UPF0154 protein EF_1734 (72 aa).

Residues Gly4–Arg26 traverse the membrane as a helical segment.

It belongs to the UPF0154 family.

The protein localises to the membrane. The chain is UPF0154 protein EF_1734 from Enterococcus faecalis (strain ATCC 700802 / V583).